Consider the following 122-residue polypeptide: C-C motif chemokine 9 (122 aa).

Positions 1–21 (MKPFHTALSFLILTTALGIWA) are cleaved as a signal peptide. 3 disulfides stabilise this stretch: C57-C80, C58-C96, and C67-C107.

It belongs to the intercrine beta (chemokine CC) family. Post-translationally, the N-terminal is proteolytically cleaved by proteases associated with inflammatory responses. The processed forms CCL9(29-101), CCL9(30-101) and CCL9(31-101) exhibit increase in CCR1-mediated signaling and chemotaxis assays in vitro. In terms of tissue distribution, expressed mainly in the liver, lung, and the thymus, although some expression has been detected in a wide variety of tissues except brain.

Its subcellular location is the secreted. Its function is as follows. Monokine with inflammatory, pyrogenic and chemokinetic properties. Circulates at high concentrations in the blood of healthy animals. Binding to a high-affinity receptor activates calcium release in neutrophils. It also inhibits colony formation of bone marrow myeloid immature progenitors. The polypeptide is C-C motif chemokine 9 (Ccl9) (Mus musculus (Mouse)).